The primary structure comprises 660 residues: Polyadenylation factor subunit 2 (660 aa).

A compositionally biased stretch (basic and acidic residues) spans 1–12 (MSYEPRGDHDKG). The segment at 1 to 32 (MSYEPRGDHDKGYGGGGGHDGLPPRNRGRRPV) is disordered. 7 WD repeats span residues 94–133 (KIKHPINVVRWTPEGRRLLTASSSGEFTLWNGTGFNFETI), 136–176 (AHDS…ESIR), 177–216 (GHTDPIRDLAFSPNDTKFVTASDDQTLKVFDFAGGSTDMT), 219–258 (GHGWDAKSCDWHPSRGLIVSGSKDHLVKLWDPRTGRCLTT), 261–301 (GHKN…DIAL), 304–344 (GHEK…TAPD), and 376–415 (AHDFAIWSLDWHPLGHILASGSNDRITRFWSRARPGEAPE). The disordered stretch occupies residues 562–660 (KAGYQPPPPP…QSKGNYTRVR (99 aa)). The span at 566–610 (QPPPPPGSAGAPMPPPGILPPGLIPPPGAAGFPMPPPGFAPPPLI) shows a compositional bias: pro residues.

Its subcellular location is the nucleus. Required for 3'-end cleavage and polyadenylation of pre-mRNAs. Also involved in chromosome segregation where it has a role in chromosome attachment to the mitotic spindle. In Neurospora crassa (strain ATCC 24698 / 74-OR23-1A / CBS 708.71 / DSM 1257 / FGSC 987), this protein is Polyadenylation factor subunit 2 (paa-1).